The sequence spans 347 residues: Subtilase cytotoxin subunit A (347 aa).

The first 21 residues, 1–21 (MLKILWTYILFLLFISASARA), serve as a signal peptide directing secretion. Positions 24–327 (PWYFDAIGLT…GRVLNAEKAI (304 aa)) constitute a Peptidase S8 domain. Catalysis depends on charge relay system residues Asp-52, His-89, and Ser-272. A disulfide bond links Cys-288 and Cys-331. An A2 domain region spans residues 322-347 (NAEKAISMFCKKNYIPVRQGRMSEEL). The Prevents secretion from ER motif lies at 344–347 (SEEL).

Belongs to the peptidase S8 family. Forms a complex with SubB with the stoichiometry SubA1:SubB5 (called SubAB5).

Its subcellular location is the secreted. It is found in the host cytoplasm. It localises to the host cytosol. The protein resides in the host endoplasmic reticulum lumen. Protease subunit of subtilase cytotoxin SubAB5. An endoprotease specific for host endoplasmic reticulum (ER) chaperone BiP/HSPA5, has no activity on human HSP70 or HSPA8. Cleaves between 'Leu-416' and 'Leu-417' of BiP/HSPA5 in the hinge between BiP's ATPase and protein-binding domains. This induces host ER stress response and eventual cell death. Culture supernatant of E.coli expressing both subA and subB are toxic for Vero cells (African green monkey kidney cell line), Chinese hamster ovary cells and Hct-8 cells (human colonic epithelial cell line); the subunits are not toxic individually. Purified SubAB5 is highly toxic, &lt;0.1 pg is able to kill at least 50% of 30'000 Vero cells in a microtiter plate assay after 3 days; no cytotoxicity is seen at 24 hours. Preabsorption with cells expressing a ganglioside GM2 mimic reduced cytotoxicity of SubAB5 by 93% in the Vero cytotoxicity assay. Intraperitoneal injection of 200 ng of purified SubAB5 kills mice; the higher the dose the faster the mice die. Animals injected intraperitoneally with purified SubAB5 have microvascular thrombi in the brain and other organs, including the renal tubules and glomeruli. Injection induces an unfolded response in mice. Mice fed E.coli cells expressing cloned SubAB5 experience drastic weight loss and appear ill and lethargic. Protein synthesis in Vero cells is transiently inhibited by SubAB5; both subunits are required for this effect. Inhibition of protein synthesis is prevented by brefeldin A; cells are arrested in the G1 phase. SubAB5 at 100 ng/ml induced caspase-dependent apoptosis in Vero cells through mitochondrial membrane damage. This chain is Subtilase cytotoxin subunit A, found in Escherichia coli.